The following is a 100-amino-acid chain: Urease subunit gamma (100 aa).

The protein belongs to the urease gamma subunit family. In terms of assembly, heterotrimer of UreA (gamma), UreB (beta) and UreC (alpha) subunits. Three heterotrimers associate to form the active enzyme.

It is found in the cytoplasm. It catalyses the reaction urea + 2 H2O + H(+) = hydrogencarbonate + 2 NH4(+). It functions in the pathway nitrogen metabolism; urea degradation; CO(2) and NH(3) from urea (urease route): step 1/1. This chain is Urease subunit gamma, found in Acetivibrio thermocellus (strain ATCC 27405 / DSM 1237 / JCM 9322 / NBRC 103400 / NCIMB 10682 / NRRL B-4536 / VPI 7372) (Clostridium thermocellum).